A 190-amino-acid chain; its full sequence is Biphenyl-2,3-diol 1,2-dioxygenase 2 (190 aa).

The 119-residue stretch at 6–124 folds into the VOC domain; it reads KFAHVVLQTS…DGNFVELQID (119 aa). Fe cation contacts are provided by His-9, His-72, and Glu-120.

It belongs to the extradiol ring-cleavage dioxygenase family. In terms of assembly, homohexamer. Requires Fe(2+) as cofactor.

The enzyme catalyses biphenyl-2,3-diol + O2 = 2-hydroxy-6-oxo-6-phenylhexa-2,4-dienoate + H(+). The protein operates within xenobiotic degradation; biphenyl degradation; 2-hydroxy-2,4-pentadienoate and benzoate from biphenyl: step 3/4. The chain is Biphenyl-2,3-diol 1,2-dioxygenase 2 (bphC2) from Rhodococcus globerulus.